The following is a 419-amino-acid chain: 3-isopropylmalate dehydratase large subunit (419 aa).

Positions 302, 362, and 365 each coordinate [4Fe-4S] cluster.

This sequence belongs to the aconitase/IPM isomerase family. LeuC type 2 subfamily. Heterodimer of LeuC and LeuD. It depends on [4Fe-4S] cluster as a cofactor.

The catalysed reaction is (2R,3S)-3-isopropylmalate = (2S)-2-isopropylmalate. It functions in the pathway amino-acid biosynthesis; L-leucine biosynthesis; L-leucine from 3-methyl-2-oxobutanoate: step 2/4. Catalyzes the isomerization between 2-isopropylmalate and 3-isopropylmalate, via the formation of 2-isopropylmaleate. This chain is 3-isopropylmalate dehydratase large subunit, found in Sulfurimonas denitrificans (strain ATCC 33889 / DSM 1251) (Thiomicrospira denitrificans (strain ATCC 33889 / DSM 1251)).